Consider the following 493-residue polypeptide: Alpha-amylase-related protein (493 aa).

A signal peptide spans 1–19 (MFKLALTLTLCLAGSLSLA). Position 20 is a pyrrolidone carboxylic acid (Q20). The cysteines at positions 47 and 103 are disulfide-linked. 3 residues coordinate Ca(2+): N117, Q168, and D177. C156 and C170 are joined by a disulfide. R205 is a chloride binding site. Residue D207 is the Nucleophile of the active site. H211 contacts Ca(2+). The Proton donor role is filled by E244. 2 residues coordinate chloride: N307 and R342. 3 disulfides stabilise this stretch: C375-C381, C417-C440, and C447-C459.

This sequence belongs to the glycosyl hydrolase 13 family. As to quaternary structure, monomer. It depends on Ca(2+) as a cofactor. Chloride serves as cofactor.

The protein resides in the secreted. It carries out the reaction Endohydrolysis of (1-&gt;4)-alpha-D-glucosidic linkages in polysaccharides containing three or more (1-&gt;4)-alpha-linked D-glucose units.. The protein is Alpha-amylase-related protein (Amyrel) of Drosophila yakuba (Fruit fly).